A 221-amino-acid chain; its full sequence is Flagellar L-ring protein 2 (221 aa).

Positions 1-16 are cleaved as a signal peptide; the sequence is MKRFLILTPMVLALCG. Cysteine 17 is lipidated: N-palmitoyl cysteine. Cysteine 17 is lipidated: S-diacylglycerol cysteine.

The protein belongs to the FlgH family. In terms of assembly, the basal body constitutes a major portion of the flagellar organelle and consists of four rings (L,P,S, and M) mounted on a central rod.

The protein localises to the cell outer membrane. The protein resides in the bacterial flagellum basal body. Its function is as follows. Assembles around the rod to form the L-ring and probably protects the motor/basal body from shearing forces during rotation. The polypeptide is Flagellar L-ring protein 2 (Yersinia pseudotuberculosis serotype I (strain IP32953)).